We begin with the raw amino-acid sequence, 86 residues long: MNKDAMSKEEKKVTDRINELYHKKENEGLTPEEEEERKELHKKFLANFRAAFKQDVENMVILDKNGKEVTSEKAKQAQRKKGLRKD.

Basic and acidic residues-rich tracts occupy residues 1-27 (MNKD…KENE) and 65-75 (NGKEVTSEKAK). Disordered regions lie at residues 1–36 (MNKD…EEEE) and 65–86 (NGKE…LRKD). The segment covering 76-86 (QAQRKKGLRKD) has biased composition (basic residues).

Belongs to the UPF0291 family.

The protein localises to the cytoplasm. In Lactobacillus acidophilus (strain ATCC 700396 / NCK56 / N2 / NCFM), this protein is UPF0291 protein LBA1279.